Reading from the N-terminus, the 254-residue chain is 3-deoxy-manno-octulosonate cytidylyltransferase (254 aa).

It belongs to the KdsB family.

It is found in the cytoplasm. It catalyses the reaction 3-deoxy-alpha-D-manno-oct-2-ulosonate + CTP = CMP-3-deoxy-beta-D-manno-octulosonate + diphosphate. Its pathway is nucleotide-sugar biosynthesis; CMP-3-deoxy-D-manno-octulosonate biosynthesis; CMP-3-deoxy-D-manno-octulosonate from 3-deoxy-D-manno-octulosonate and CTP: step 1/1. It participates in bacterial outer membrane biogenesis; lipopolysaccharide biosynthesis. Activates KDO (a required 8-carbon sugar) for incorporation into bacterial lipopolysaccharide in Gram-negative bacteria. The chain is 3-deoxy-manno-octulosonate cytidylyltransferase from Ectopseudomonas mendocina (strain ymp) (Pseudomonas mendocina).